The following is a 525-amino-acid chain: MAAQLNVEQLEVSLDGLTLSPDSEERPGAEGAPPQTPPSSAPGNGLGSGASGQQREPGEAAAEGAAEEARRMEQHWGFGLEELYGLALRFYKIKDGKAFHPTYEEKLKFVALHKQVLLGPYNPDTSPEVGFFDVLGNDRRREWAALGNMSKEDAMVEFVKLLNKCCPLLSAYVASHRIEKEEEEKRRKAEEERRQREEEERERLQKEEEKRKREKEDRLRREEEERRRIEEERLRLEQQKQQIMAALNSQTAVQFQQYAAQQYPGNYEQQQILIRQLQEQHYQQYMQQLYQVQLAQQQAALQKQQEVVMAGASLPASSKVNTAGASDTLSVNGQAKTHTENSEKVLEPEAAEEALENGPKDSLPVIAAPSMWTRPQIKDFKEKIRQDADSVITVRRGEVVTVRVPTHEEGSYLFWEFATDSYDIGFGVYFEWTDSPNAAVSVHVSESSDEEEEEEENVTCEEKAKKNANKPLLDEIVPVYRRDCHEEVYAGSHQYPGRGVYLLKFDNSYSLWRSKSVYYRVYYTR.

A2 carries the post-translational modification N-acetylalanine. Residues 12–68 (VSLDGLTLSPDSEERPGAEGAPPQTPPSSAPGNGLGSGASGQQREPGEAAAEGAAEE) are disordered. A Phosphoserine modification is found at S13. T18 is subject to Phosphothreonine. Phosphoserine is present on residues S20 and S40. Residues 52–64 (GQQREPGEAAAEG) show a composition bias toward low complexity. An ACB domain is found at 80–171 (LEELYGLALR…LNKCCPLLSA (92 aa)). A coiled-coil region spans residues 169–254 (LSAYVASHRI…AALNSQTAVQ (86 aa)). The tract at residues 180–226 (KEEEEKRRKAEEERRQREEEERERLQKEEEKRKREKEDRLRREEEER) is disordered. Positions 238–305 (QQKQQIMAAL…QQQAALQKQQ (68 aa)) are q domain; Interaction with PI4KB, TBC1D22A and TBC1D22B. Residues 319–336 (KVNTAGASDTLSVNGQAK) show a composition bias toward polar residues. Residues 319–346 (KVNTAGASDTLSVNGQAKTHTENSEKVL) form a disordered region. Over residues 337-346 (THTENSEKVL) the composition is skewed to basic and acidic residues. In terms of domain architecture, GOLD spans 381–523 (KEKIRQDADS…SKSVYYRVYY (143 aa)). A coiled-coil region spans residues 448–470 (SDEEEEEEENVTCEEKAKKNANK).

In terms of assembly, homodimer. Interacts with the C-terminal cytoplasmic domain of giantin/GOLGB1. Interacts with PBR and PKA regulatory subunit RI-alpha. Does not interact with PKA regulatory subunit RI-beta nor PKA regulatory subunit RII-alpha. Interacts (via Q domain) with PI4KB (via N-terminus). Interacts (via Q domain) with TBC1D22A and TBC1D22B; interactions with PI4KB and with TBC1D22A and TBC1D22B are mutually exclusive. Interacts with C10ORF76 and RAB11B. As to expression, expressed in brain (hippocampus, olfactory bulb, neuronal and glial cells of the cortex), eye, submaxillary gland, testis (interstitial and tubular compartments), ovary (granulosa cells, theca cells at late stages and primary follicles), adrenal gland (fasciculata and glomerulosa cells), heart, liver, and steroidogenic cell lines.

Its subcellular location is the golgi apparatus membrane. It localises to the mitochondrion. Functionally, involved in the maintenance of Golgi structure by interacting with giantin, affecting protein transport between the endoplasmic reticulum and Golgi. Involved in hormone-induced steroid biosynthesis in testicular Leydig cells. Recruits PI4KB to the Golgi apparatus membrane; enhances the enzyme activity of PI4KB activity via its membrane recruitment thereby increasing the local concentration of the substrate in the vicinity of the kinase. This Mus musculus (Mouse) protein is Golgi resident protein GCP60 (Acbd3).